A 228-amino-acid polypeptide reads, in one-letter code: Protein boule (228 aa).

Positions Asn33 to Lys110 constitute an RRM domain. In terms of domain architecture, DAZ spans Pro151–Asn178. Low complexity predominate over residues Pro193–Pro214. The interval Pro193–Val228 is disordered. Residues Glu219–Val228 show a composition bias toward basic and acidic residues.

The protein belongs to the RRM DAZ family. Interacts with the translational regulator orb2. As to expression, testis specific.

The protein localises to the nucleus. Its subcellular location is the cytoplasm. Functionally, RNA-binding protein that plays a central role in spermatogenesis. Required for meiotic entry and germline differentiation, at the transition between G2 and M phases of meiosis I. Acts by regulating translation of specific mRNAs, possibly by binding to their 3'-UTR. Essential for translation of twine (twe) mRNA. Required for the expression of various genes such as CG6784, CG17210, CG15841 scpr-B, scpr-C, and rho-6. This chain is Protein boule (bol), found in Drosophila melanogaster (Fruit fly).